The chain runs to 401 residues: L-threonine ammonia-lyase (401 aa).

K51 is subject to N6-(pyridoxal phosphate)lysine. Residues N78, 178-181, and S301 contribute to the pyridoxal 5'-phosphate site; that span reads GGGL. Positions 326–401 constitute an ACT domain; it reads FIETFVMDRP…AKGYEVRIVG (76 aa).

This sequence belongs to the serine/threonine dehydratase family. In terms of assembly, homotetramer. Pyridoxal 5'-phosphate serves as cofactor.

The enzyme catalyses L-threonine = 2-oxobutanoate + NH4(+). It catalyses the reaction L-serine = pyruvate + NH4(+). It functions in the pathway amino-acid biosynthesis; L-isoleucine biosynthesis; 2-oxobutanoate from L-threonine: step 1/1. With respect to regulation, activity is insensitive to allosteric regulators L-valine and L-isoleucine at low concentrations, while these L-amino acids are inhibitors at high concentrations. Is insensitive to ammonium chloride and AMP. Inhibited in the presence of aminoxyacetic acid (AOAA), an inhibitor of pyridoxal phosphate-dependent enzymes. Functionally, catalyzes the conversion of L-threonine to 2-oxobutanoate and ammonia. Can also use L-serine, but the catalytic efficiency toward L-threonine is about sixfold higher than that toward L-serine. Also shows weak activity toward L-allo-threonine, but cannot use the corresponding D-amino acids. Does not exhibit racemase activity toward various amino acids, including serine. Physiologically, is likely involved in the threonine-dependent pathway of isoleucine biosynthesis. The polypeptide is L-threonine ammonia-lyase (Thermotoga maritima (strain ATCC 43589 / DSM 3109 / JCM 10099 / NBRC 100826 / MSB8)).